A 249-amino-acid polypeptide reads, in one-letter code: Probable proteasome subunit alpha type-2 (249 aa).

Belongs to the peptidase T1A family. In terms of assembly, the 26S proteasome consists of a 20S proteasome core and two 19S regulatory subunits. The 20S proteasome core is composed of 28 subunits that are arranged in four stacked rings, resulting in a barrel-shaped structure. The two end rings are each formed by seven alpha subunits, and the two central rings are each formed by seven beta subunits. The catalytic chamber with the active sites is on the inside of the barrel.

Its subcellular location is the cytoplasm. The protein resides in the nucleus. Its function is as follows. The proteasome is a multicatalytic proteinase complex which is characterized by its ability to cleave peptides with Arg, Phe, Tyr, Leu, and Glu adjacent to the leaving group at neutral or slightly basic pH. The proteasome has an ATP-dependent proteolytic activity. This Neurospora crassa (strain ATCC 24698 / 74-OR23-1A / CBS 708.71 / DSM 1257 / FGSC 987) protein is Probable proteasome subunit alpha type-2 (pca-2).